The chain runs to 355 residues: Peptide chain release factor 1 (355 aa).

Gln233 carries the post-translational modification N5-methylglutamine. Residues 280 to 293 show a composition bias toward basic and acidic residues; that stretch reads ERRKKEQERADSRR. Positions 280 to 306 are disordered; the sequence is ERRKKEQERADSRRGQVGSGNRSERIR.

This sequence belongs to the prokaryotic/mitochondrial release factor family. In terms of processing, methylated by PrmC. Methylation increases the termination efficiency of RF1.

It is found in the cytoplasm. In terms of biological role, peptide chain release factor 1 directs the termination of translation in response to the peptide chain termination codons UAG and UAA. This is Peptide chain release factor 1 from Rickettsia africae (strain ESF-5).